Reading from the N-terminus, the 342-residue chain is Dihydroorotate dehydrogenase (quinone) (342 aa).

FMN is bound by residues 60 to 64 (AGLDK) and Thr-84. A substrate-binding site is contributed by Lys-64. Position 109–113 (109–113 (NRMGF)) interacts with substrate. The FMN site is built by Asn-137 and Asn-170. Residue Asn-170 coordinates substrate. Catalysis depends on Ser-173, which acts as the Nucleophile. Asn-175 serves as a coordination point for substrate. 2 residues coordinate FMN: Lys-215 and Thr-243. Residue 244–245 (NT) participates in substrate binding. FMN-binding positions include Gly-266, Gly-295, and 316-317 (YS).

This sequence belongs to the dihydroorotate dehydrogenase family. Type 2 subfamily. As to quaternary structure, monomer. The cofactor is FMN.

Its subcellular location is the cell membrane. It carries out the reaction (S)-dihydroorotate + a quinone = orotate + a quinol. It participates in pyrimidine metabolism; UMP biosynthesis via de novo pathway; orotate from (S)-dihydroorotate (quinone route): step 1/1. Its function is as follows. Catalyzes the conversion of dihydroorotate to orotate with quinone as electron acceptor. In Nitrosomonas europaea (strain ATCC 19718 / CIP 103999 / KCTC 2705 / NBRC 14298), this protein is Dihydroorotate dehydrogenase (quinone).